The following is a 194-amino-acid chain: MKGLYQAAGRILVTLGILSVCSGVIAFFPVFSYKPWFTGWSVRIACPIWNGALAITTGVLLLLAYREWTQRYLGEATFTFVILSIMGCPLHFAIALESALLGPYCFYSFSGIAGTNYLGYAVTFPYPYAKFPLACVDPPHYEEYHLTLQALDLCLSFTLLCTSLTVFIKLSARLIQNGHINMQLPAGNPNPFSP.

5 helical membrane-spanning segments follow: residues 11–31 (ILVTLGILSVCSGVIAFFPVF), 44–64 (IACPIWNGALAITTGVLLLLA), 76–96 (ATFTFVILSIMGCPLHFAIAL), 99–119 (ALLGPYCFYSFSGIAGTNYLG), and 148–168 (LQALDLCLSFTLLCTSLTVFI).

It is found in the membrane. The sequence is that of Transmembrane protein 212 (TMEM212) from Homo sapiens (Human).